Reading from the N-terminus, the 247-residue chain is Transmembrane protein 69 (247 aa).

5 helical membrane passes run 97 to 117 (ALCVTLAGLIPFVAPPLVMLM), 122 to 142 (IPILAFTQMAYGASFLSFLGG), 159 to 179 (YLNLASSAAPLFFSWFAFLIS), 185 to 205 (AIVTVIMGMGVAFHLELFLLP), and 216 to 236 (IVVTLLATFSFIITLVVKSSF).

The protein resides in the membrane. The chain is Transmembrane protein 69 (TMEM69) from Homo sapiens (Human).